Reading from the N-terminus, the 440-residue chain is UDP-N-acetylmuramoylalanine--D-glutamate ligase (440 aa).

128–134 (GTNGKTT) provides a ligand contact to ATP.

It belongs to the MurCDEF family.

The protein localises to the cytoplasm. The enzyme catalyses UDP-N-acetyl-alpha-D-muramoyl-L-alanine + D-glutamate + ATP = UDP-N-acetyl-alpha-D-muramoyl-L-alanyl-D-glutamate + ADP + phosphate + H(+). The protein operates within cell wall biogenesis; peptidoglycan biosynthesis. In terms of biological role, cell wall formation. Catalyzes the addition of glutamate to the nucleotide precursor UDP-N-acetylmuramoyl-L-alanine (UMA). The polypeptide is UDP-N-acetylmuramoylalanine--D-glutamate ligase (Lawsonia intracellularis (strain PHE/MN1-00)).